Here is a 2020-residue protein sequence, read N- to C-terminus: Metacaspase-2 (2020 aa).

Basic and acidic residues-rich tracts occupy residues 51–60 and 69–78; these read SENDRNESIQ and DNRKTNKSEK. 2 disordered regions span residues 51–78 and 573–614; these read SENDRNESIQKKQMLSSMDNRKTNKSEK and RNGN…NINN. A compositionally biased stretch (low complexity) spans 576–614; that stretch reads NINNNKNNNINNNNNNINNNNNNINNNNNNINNNNNINN.

This sequence belongs to the peptidase C14B family.

It localises to the cytoplasm. Ca(2+) does not appear to affect catalytic activity. In terms of biological role, protease that cleaves specifically after arginine or lysine residues. May play a role in parasite growth and/or development. This chain is Metacaspase-2, found in Plasmodium falciparum (isolate 3D7).